The following is a 287-amino-acid chain: 2-dehydro-3-deoxyphosphooctonate aldolase (287 aa).

This sequence belongs to the KdsA family.

The protein localises to the cytoplasm. It carries out the reaction D-arabinose 5-phosphate + phosphoenolpyruvate + H2O = 3-deoxy-alpha-D-manno-2-octulosonate-8-phosphate + phosphate. It participates in carbohydrate biosynthesis; 3-deoxy-D-manno-octulosonate biosynthesis; 3-deoxy-D-manno-octulosonate from D-ribulose 5-phosphate: step 2/3. The protein operates within bacterial outer membrane biogenesis; lipopolysaccharide biosynthesis. This chain is 2-dehydro-3-deoxyphosphooctonate aldolase, found in Nitrobacter hamburgensis (strain DSM 10229 / NCIMB 13809 / X14).